Reading from the N-terminus, the 293-residue chain is Probable endonuclease 4 (293 aa).

The Zn(2+) site is built by histidine 77, histidine 118, glutamate 153, aspartate 187, histidine 190, histidine 221, aspartate 234, histidine 236, and glutamate 266.

Belongs to the AP endonuclease 2 family. It depends on Zn(2+) as a cofactor.

The enzyme catalyses Endonucleolytic cleavage to 5'-phosphooligonucleotide end-products.. In terms of biological role, endonuclease IV plays a role in DNA repair. It cleaves phosphodiester bonds at apurinic or apyrimidinic (AP) sites, generating a 3'-hydroxyl group and a 5'-terminal sugar phosphate. The protein is Probable endonuclease 4 of Mesoplasma florum (strain ATCC 33453 / NBRC 100688 / NCTC 11704 / L1) (Acholeplasma florum).